Consider the following 143-residue polypeptide: uncharacterized protein (143 aa).

Positions 1–21 (MAAMDTGQRADPSNPGDKEGD) are disordered.

This is an uncharacterized protein from Homo sapiens (Human).